Consider the following 434-residue polypeptide: Eukaryotic translation initiation factor 3 subunit E (434 aa).

The PCI domain occupies 219–392 (FFNHPKGRDL…GHVVMGTQPL (174 aa)).

It belongs to the eIF-3 subunit E family. Component of the eukaryotic translation initiation factor 3 (eIF-3) complex. The eIF-3 complex interacts with pix. Interacts with mxt.

The protein resides in the cytoplasm. In terms of biological role, component of the eukaryotic translation initiation factor 3 (eIF-3) complex, which is involved in protein synthesis of a specialized repertoire of mRNAs and, together with other initiation factors, stimulates binding of mRNA and methionyl-tRNAi to the 40S ribosome. The eIF-3 complex specifically targets and initiates translation of a subset of mRNAs involved in cell proliferation. This is Eukaryotic translation initiation factor 3 subunit E (eIF3-S6) from Drosophila virilis (Fruit fly).